We begin with the raw amino-acid sequence, 410 residues long: Protein CNPPD1 (410 aa).

Residues 233 to 253 form a helical membrane-spanning segment; it reads CLLAVAYVSSVALAVASVAVI.

This sequence belongs to the CNPPD1 family.

It is found in the membrane. The sequence is that of Protein CNPPD1 (CNPPD1) from Pongo abelii (Sumatran orangutan).